Consider the following 1661-residue polypeptide: ATP-dependent bile acid permease (1661 aa).

Residues 1 to 33 are Lumenal-facing; the sequence is MHHVLNSTRPDHRFWFYDDVTQYGRTKYLNYYT. A glycan (N-linked (GlcNAc...) asparagine) is linked at asparagine 6. The chain crosses the membrane as a helical span at residues 34-54; the sequence is PLVLLIFTVLFITYNIWKHYY. The Cytoplasmic segment spans residues 55 to 74; sequence YYDVLHLKQKNPIDELLYSS. Residues 75 to 95 traverse the membrane as a helical segment; that stretch reads TDEDEQSPLINNNTITTNYVD. Residues 96 to 133 lie on the Lumenal side of the membrane; sequence NNCTKDALKNRHFSLEKLKSVKVNGEPHGTPEIVRRGF. A glycan (N-linked (GlcNAc...) asparagine) is linked at asparagine 97. The helical transmembrane segment at 134–154 threads the bilayer; it reads IEKSRIILEFFLVLSQVIIHS. Residues 155–166 are Cytoplasmic-facing; it reads FILLHYVNKNPE. A helical membrane pass occupies residues 167–187; sequence FTQQGTITGLVEWCALFIIVS. Topologically, residues 188-205 are lumenal; that stretch reads LRLANVNQNFKFINKYPG. The chain crosses the membrane as a helical span at residues 206–226; the sequence is NLWSVSFINYLALFISMILPF. At 227–345 the chain is on the cytoplasmic side; that stretch reads RSIFIHHINS…VKRKRIFSLN (119 aa). Residues 346 to 366 traverse the membrane as a helical segment; it reads LFFFFSNYLVLQCFWAFLGSV. In terms of domain architecture, ABC transmembrane type-1 1 spans 354 to 662; sequence LVLQCFWAFL…LSDMLSFVVQ (309 aa). At 367–393 the chain is on the lumenal side; the sequence is LSFIPTVLLKRILEYVEDQSSAPSNLA. A helical transmembrane segment spans residues 394–414; sequence WFYVTVMFVGRILVAICQAQA. Residues 415–495 lie on the Cytoplasmic side of the membrane; sequence LFFGRRVCIR…AFKVSEICGY (81 aa). The disordered stretch occupies residues 445 to 468; it reads NKTKPSNEDPQEINDQKSINGDEE. Residues 496–516 form a helical membrane-spanning segment; sequence LHSFLEAFVMTVVALALLYRL. The Lumenal segment spans residues 517–519; the sequence is LGF. Residues 520–540 traverse the membrane as a helical segment; sequence AAIVGVLIIVAMLPLNYKLAK. The Cytoplasmic segment spans residues 541–602; it reads YIGDLQKKNL…LLLMRSIVWS (62 aa). The helical transmembrane segment at 603–623 threads the bilayer; sequence ISSFLWFVTPTIVTAASFAYY. Topologically, residues 624–644 are lumenal; it reads IYVQGEVLTTPVAFTALSLFT. A helical membrane pass occupies residues 645–665; that stretch reads LLRDPLDRLSDMLSFVVQSKV. Residues 666-1053 lie on the Cytoplasmic side of the membrane; it reads SLDRVQDFLN…SWWVRAWASH (388 aa). An ABC transporter 1 domain is found at 694–935; sequence FAFENSTISW…GLFGEDELVK (242 aa). Residue 729 to 736 coordinates ATP; it reads GPTGSGKT. 3 positions are modified to phosphoserine: serine 936, serine 940, and serine 955. Residues 1026–1345 enclose the ABC transmembrane type-1 2 domain; sequence VSFLASLFLI…LVRLYSEVEM (320 aa). Residues 1054–1074 form a helical membrane-spanning segment; that stretch reads NVIAKIIPRAQRAIAFISKKA. Residues 1075–1114 lie on the Lumenal side of the membrane; it reads SHLIDWRGSSQISMASAENQPSSGHSTMYYLVLYLIIGFA. Residues 1115–1135 traverse the membrane as a helical segment; sequence QALLGAGKTILNFVAGINASR. The Cytoplasmic portion of the chain corresponds to 1136–1178; it reads KIFNMILNKVLHSKIRFFDATPTGRIMNRFSKDIEAIDQELTP. Residues 1179–1199 traverse the membrane as a helical segment; the sequence is YIQGAFYSLIECLSTVILITF. A topological domain (lumenal) is located at residue isoleucine 1200. A helical transmembrane segment spans residues 1201-1221; that stretch reads TPQFLSVAIVVSILYYFVGYF. Residues 1222–1292 lie on the Cytoplasmic side of the membrane; that stretch reads YMAGSRELKR…VANRWLAFRI (71 aa). Residues 1293–1313 form a helical membrane-spanning segment; sequence DMIGSLVIFGAGLFILFNINN. The Lumenal segment spans residues 1314 to 1315; it reads LD. A helical transmembrane segment spans residues 1316–1336; sequence SGMAGISLTYAISFTEGALWL. The Cytoplasmic segment spans residues 1337 to 1661; it reads VRLYSEVEMN…FVEKLNSKKD (325 aa). Positions 1381 to 1636 constitute an ABC transporter 2 domain; that stretch reads IEVNDLSLRY…KQSAFYSMCE (256 aa). ATP is bound at residue 1415–1422; the sequence is GRTGAGKS.

This sequence belongs to the ABC transporter superfamily. ABCC family. Conjugate transporter (TC 3.A.1.208) subfamily.

Its subcellular location is the vacuole membrane. Its function is as follows. Vacuolar class C ABC transporter which regulates the translocation of phosphatidylcholine to the vacuole lumen, the release of lumenal calcium stores, and acts as a negative regulator of vacuole fusion. Exhibits ATP-dependent bile acid transport. This Saccharomyces cerevisiae (strain ATCC 204508 / S288c) (Baker's yeast) protein is ATP-dependent bile acid permease (YBT1).